The primary structure comprises 969 residues: Isoleucine--tRNA ligase (969 aa).

A 'HIGH' region motif is present at residues 70-80; it reads PYANGAIHIGH. Glu601 is a binding site for L-isoleucyl-5'-AMP. Positions 642-646 match the 'KMSKS' region motif; it reads KMSKS. Lys645 serves as a coordination point for ATP.

It belongs to the class-I aminoacyl-tRNA synthetase family. IleS type 1 subfamily. In terms of assembly, monomer.

It is found in the cytoplasm. The catalysed reaction is tRNA(Ile) + L-isoleucine + ATP = L-isoleucyl-tRNA(Ile) + AMP + diphosphate. In terms of biological role, catalyzes the attachment of isoleucine to tRNA(Ile). As IleRS can inadvertently accommodate and process structurally similar amino acids such as valine, to avoid such errors it has two additional distinct tRNA(Ile)-dependent editing activities. One activity is designated as 'pretransfer' editing and involves the hydrolysis of activated Val-AMP. The other activity is designated 'posttransfer' editing and involves deacylation of mischarged Val-tRNA(Ile). This chain is Isoleucine--tRNA ligase, found in Caulobacter vibrioides (strain ATCC 19089 / CIP 103742 / CB 15) (Caulobacter crescentus).